Consider the following 258-residue polypeptide: tRNA pseudouridine synthase A (258 aa).

The active-site Nucleophile is the D52. Y110 serves as a coordination point for substrate.

This sequence belongs to the tRNA pseudouridine synthase TruA family. Homodimer.

The enzyme catalyses uridine(38/39/40) in tRNA = pseudouridine(38/39/40) in tRNA. Its function is as follows. Formation of pseudouridine at positions 38, 39 and 40 in the anticodon stem and loop of transfer RNAs. The sequence is that of tRNA pseudouridine synthase A from Francisella tularensis subsp. holarctica (strain LVS).